The following is a 239-amino-acid chain: Phosducin-like protein 3 (239 aa).

A disordered region spans residues 16–37 (KKGILPPKETPVEEEEDEQLHL). Positions 28–201 (EEEEDEQLHL…LEWRLSESGA (174 aa)) constitute a Phosducin domain. Residue S41 is modified to Phosphoserine. The interval 89 to 239 (FGELKEISGQ…RDGEEDSDED (151 aa)) is thioredoxin fold. Positions 217-227 (QLMTSIRCSAN) are enriched in polar residues. The segment at 217–239 (QLMTSIRCSANTHRDGEEDSDED) is disordered.

Belongs to the phosducin family. In terms of assembly, interacts (via thioredoxin fold region) with kdr/vegfr2 (via juxtamembrane domain). As to expression, expressed in endothelial cells.

The protein localises to the cytoplasm. The protein resides in the perinuclear region. Its subcellular location is the endoplasmic reticulum. In terms of biological role, acts as a chaperone for the angiogenic VEGF receptor KDR/VEGFR2, increasing its abundance by inhibiting its ubiquitination and degradation. Inhibits the folding activity of the chaperonin-containing T-complex (CCT) which leads to inhibition of cytoskeletal actin folding. Acts as a chaperone during heat shock alongside HSP90 and HSP40/70 chaperone complexes. Modulates the activation of caspases during apoptosis. This chain is Phosducin-like protein 3, found in Danio rerio (Zebrafish).